A 136-amino-acid chain; its full sequence is Ribonuclease YqgF (136 aa).

Belongs to the YqgF nuclease family. In terms of assembly, monomer; also forms low amounts of dimers. Mn(2+) serves as cofactor.

The protein resides in the cytoplasm. Its function is as follows. Has robust sequence-specific RNase activity, acting as a 5'-3' exo/endonuclease on ssRNA substrates with minimally 3 consecutive adenine bases. Has no detectable nuclease activity on dsRNA, dsDNA or Holliday junction DNA. This Deinococcus radiodurans (strain ATCC 13939 / DSM 20539 / JCM 16871 / CCUG 27074 / LMG 4051 / NBRC 15346 / NCIMB 9279 / VKM B-1422 / R1) protein is Ribonuclease YqgF.